Reading from the N-terminus, the 424-residue chain is Glutamate-1-semialdehyde 2,1-aminomutase (424 aa).

Lysine 266 is modified (N6-(pyridoxal phosphate)lysine).

This sequence belongs to the class-III pyridoxal-phosphate-dependent aminotransferase family. HemL subfamily. Homodimer. It depends on pyridoxal 5'-phosphate as a cofactor.

It localises to the cytoplasm. It carries out the reaction (S)-4-amino-5-oxopentanoate = 5-aminolevulinate. It participates in porphyrin-containing compound metabolism; protoporphyrin-IX biosynthesis; 5-aminolevulinate from L-glutamyl-tRNA(Glu): step 2/2. In Azoarcus sp. (strain BH72), this protein is Glutamate-1-semialdehyde 2,1-aminomutase.